Reading from the N-terminus, the 345-residue chain is Phosphoribosylformylglycinamidine cyclo-ligase (345 aa).

The protein belongs to the AIR synthase family.

It localises to the cytoplasm. It catalyses the reaction 2-formamido-N(1)-(5-O-phospho-beta-D-ribosyl)acetamidine + ATP = 5-amino-1-(5-phospho-beta-D-ribosyl)imidazole + ADP + phosphate + H(+). The protein operates within purine metabolism; IMP biosynthesis via de novo pathway; 5-amino-1-(5-phospho-D-ribosyl)imidazole from N(2)-formyl-N(1)-(5-phospho-D-ribosyl)glycinamide: step 2/2. This is Phosphoribosylformylglycinamidine cyclo-ligase from Anaeromyxobacter dehalogenans (strain 2CP-1 / ATCC BAA-258).